Here is a 326-residue protein sequence, read N- to C-terminus: Beta-ketoacyl-[acyl-carrier-protein] synthase III (326 aa).

Active-site residues include cysteine 116 and histidine 253. The tract at residues glutamine 254 to arginine 258 is ACP-binding. The active site involves asparagine 283.

Belongs to the thiolase-like superfamily. FabH family. Homodimer.

It localises to the cytoplasm. It carries out the reaction malonyl-[ACP] + acetyl-CoA + H(+) = 3-oxobutanoyl-[ACP] + CO2 + CoA. Its pathway is lipid metabolism; fatty acid biosynthesis. Its function is as follows. Catalyzes the condensation reaction of fatty acid synthesis by the addition to an acyl acceptor of two carbons from malonyl-ACP. Catalyzes the first condensation reaction which initiates fatty acid synthesis and may therefore play a role in governing the total rate of fatty acid production. Possesses both acetoacetyl-ACP synthase and acetyl transacylase activities. Its substrate specificity determines the biosynthesis of branched-chain and/or straight-chain of fatty acids. The polypeptide is Beta-ketoacyl-[acyl-carrier-protein] synthase III (Jannaschia sp. (strain CCS1)).